The chain runs to 248 residues: 2,3-bisphosphoglycerate-dependent phosphoglycerate mutase (248 aa).

Substrate is bound by residues 10-17 (RHGQSEWN), 23-24 (TG), Arg62, 89-92 (ERHY), Lys100, 116-117 (RR), and 183-184 (GN). Catalysis depends on His11, which acts as the Tele-phosphohistidine intermediate. The Proton donor/acceptor role is filled by Glu89.

The protein belongs to the phosphoglycerate mutase family. BPG-dependent PGAM subfamily.

The enzyme catalyses (2R)-2-phosphoglycerate = (2R)-3-phosphoglycerate. It participates in carbohydrate degradation; glycolysis; pyruvate from D-glyceraldehyde 3-phosphate: step 3/5. Catalyzes the interconversion of 2-phosphoglycerate and 3-phosphoglycerate. This Corynebacterium glutamicum (strain ATCC 13032 / DSM 20300 / JCM 1318 / BCRC 11384 / CCUG 27702 / LMG 3730 / NBRC 12168 / NCIMB 10025 / NRRL B-2784 / 534) protein is 2,3-bisphosphoglycerate-dependent phosphoglycerate mutase.